Here is a 521-residue protein sequence, read N- to C-terminus: Type-2 serine--tRNA ligase (521 aa).

An L-serine-binding site is contributed by Ala-316. Cys-318 is a Zn(2+) binding site. L-serine is bound at residue Arg-347. ATP-binding positions include Arg-347–Glu-349 and Arg-358–Val-359. Arg-364–Glu-366 lines the L-serine pocket. Positions 366 and 473 each coordinate Zn(2+). Arg-480 is a binding site for ATP.

It belongs to the class-II aminoacyl-tRNA synthetase family. Type-2 seryl-tRNA synthetase subfamily. As to quaternary structure, homodimer. It depends on Zn(2+) as a cofactor.

It localises to the cytoplasm. The enzyme catalyses tRNA(Ser) + L-serine + ATP = L-seryl-tRNA(Ser) + AMP + diphosphate + H(+). The catalysed reaction is tRNA(Sec) + L-serine + ATP = L-seryl-tRNA(Sec) + AMP + diphosphate + H(+). Its pathway is aminoacyl-tRNA biosynthesis; selenocysteinyl-tRNA(Sec) biosynthesis; L-seryl-tRNA(Sec) from L-serine and tRNA(Sec): step 1/1. Functionally, catalyzes the attachment of serine to tRNA(Ser). Is also able to aminoacylate tRNA(Sec) with serine, to form the misacylated tRNA L-seryl-tRNA(Sec), which will be further converted into selenocysteinyl-tRNA(Sec). This is Type-2 serine--tRNA ligase (serS) from Methanocaldococcus jannaschii (strain ATCC 43067 / DSM 2661 / JAL-1 / JCM 10045 / NBRC 100440) (Methanococcus jannaschii).